Reading from the N-terminus, the 745-residue chain is Copper-transporting ATPase (745 aa).

In terms of domain architecture, HMA spans 1 to 67; that stretch reads MKESFYIEGM…LIEKLGYSPK (67 aa). Over 1–83 the chain is Cytoplasmic; it reads MKESFYIEGM…KKEFFSPNVK (83 aa). 2 residues coordinate Cu cation: cysteine 12 and cysteine 15. A helical membrane pass occupies residues 84 to 104; the sequence is LALAVIFTLFVVYLSMGAMLS. Residues 105-124 lie on the Extracellular side of the membrane; sequence PSLLPKSLLAIDNHSNFLNA. The chain crosses the membrane as a helical span at residues 125–144; it reads CLQLIGTLIVMHWGRDFYIQ. At 145 to 151 the chain is on the cytoplasmic side; that stretch reads GFKALWH. A helical membrane pass occupies residues 152–172; it reads RQPNMSSLIAIGTSAALISSL. The Extracellular segment spans residues 173–194; it reads WQLYLVYTDHYTDQWSYGHYYF. A helical transmembrane segment spans residues 195–215; the sequence is ESVCVILMFVMVGKRIENVSK. Over 216 to 343 the chain is Cytoplasmic; sequence DKALDAMQAL…KAEISRLADK (128 aa). A helical transmembrane segment spans residues 344–366; the sequence is VSSVFVPSVIAIAILAFVVWLII. At 367-379 the chain is on the extracellular side; that stretch reads APKPDFWWNFGIA. A helical membrane pass occupies residues 380 to 397; sequence LEVFVSVLVISCPCALGL. Over 398–685 the chain is Cytoplasmic; the sequence is ATLMSILVAN…KLSQATIKNI (288 aa). Residue aspartate 435 is the 4-aspartylphosphate intermediate of the active site. Positions 631 and 635 each coordinate Mg(2+). The helical transmembrane segment at 686 to 705 threads the bilayer; sequence KENLFWAFCYNSVFIPLACG. The Extracellular segment spans residues 706-716; it reads VLYKANIMLSP. The helical transmembrane segment at 717 to 735 threads the bilayer; it reads AIAGLAMSLSSVSVVLNSQ. Topologically, residues 736–745 are cytoplasmic; sequence RLRNFKIKDH.

It belongs to the cation transport ATPase (P-type) (TC 3.A.3) family. Type IB subfamily.

It is found in the cell membrane. It carries out the reaction Cu(2+)(in) + ATP + H2O = Cu(2+)(out) + ADP + phosphate + H(+). Its function is as follows. Probably involved in copper export. In Helicobacter pylori (Campylobacter pylori), this protein is Copper-transporting ATPase (copA).